The sequence spans 566 residues: Viral IRF3-like protein (566 aa).

2 disordered regions span residues 151–170 (PRPF…PAFC) and 176–236 (QTGA…VHTD).

It belongs to the IRF family. Interacts with host SKP2. Interacts with host USP7.

In terms of biological role, plays a role in the inhibition of host immune response. Interferes with the transactivating potential of cellular IRFs IRF3 and IRF7 that play a critical role in the induction of IFNA and IFNB genes. Additionally, interferes with surface major histocompatibility complex class II (MHC-II) antigen presentation. This Human herpesvirus 8 type P (isolate GK18) (HHV-8) protein is Viral IRF3-like protein (vIRF-3).